The sequence spans 186 residues: LIM domain-containing protein DDB_G0271356 (186 aa).

LIM zinc-binding domains lie at 7–67 (PECY…DKFA), 68–127 (PKCQ…KIGF), and 128–186 (LCRH…KLYG).

In Dictyostelium discoideum (Social amoeba), this protein is LIM domain-containing protein DDB_G0271356.